The chain runs to 756 residues: Hormone-sensitive lipase (756 aa).

An Involved in the stabilization of the negatively charged intermediate by the formation of the oxyanion hole motif is present at residues 350-352 (HGG). Residue S424 is part of the active site. Disordered stretches follow at residues 542-570 (SVSK…TDSL) and 581-600 (RNSS…ETLG). S552 carries the phosphoserine; by PKA modification. S554 carries the phosphoserine; by AMPK modification. Residues 581–596 (RNSSDTTDTPELSLSA) are compositionally biased toward polar residues. S595 and S649 each carry phosphoserine. Residues D692 and H722 contribute to the active site.

It belongs to the 'GDXG' lipolytic enzyme family. As to quaternary structure, monomer and homodimer. Interacts with CAVIN1 in the adipocyte cytoplasm. Interacts with PLIN5. Phosphorylation by AMPK reduces its translocation towards the lipid droplets.

It localises to the cell membrane. The protein localises to the membrane. The protein resides in the caveola. Its subcellular location is the cytoplasm. It is found in the cytosol. It localises to the lipid droplet. It carries out the reaction a diacylglycerol + H2O = a monoacylglycerol + a fatty acid + H(+). The catalysed reaction is a triacylglycerol + H2O = a diacylglycerol + a fatty acid + H(+). The enzyme catalyses a monoacylglycerol + H2O = glycerol + a fatty acid + H(+). It catalyses the reaction Hydrolyzes glycerol monoesters of long-chain fatty acids.. It carries out the reaction 1,2-di-(9Z-octadecenoyl)-glycerol + (9Z)-octadecenoate + H(+) = 1,2,3-tri-(9Z-octadecenoyl)-glycerol + H2O. The catalysed reaction is 2,3-di-(9Z)-octadecenoyl-sn-glycerol + H2O = 2-(9Z-octadecenoyl)-glycerol + (9Z)-octadecenoate + H(+). The enzyme catalyses cholesteryl (9Z-octadecenoate) + H2O = cholesterol + (9Z)-octadecenoate + H(+). It catalyses the reaction 1,2,3-tri-(9Z-octadecenoyl)-glycerol + H2O = di-(9Z)-octadecenoylglycerol + (9Z)-octadecenoate + H(+). It carries out the reaction all-trans-retinyl hexadecanoate + H2O = all-trans-retinol + hexadecanoate + H(+). The catalysed reaction is 1,2-di-(9Z-octadecenoyl)-glycerol + H2O = (9Z-octadecenoyl)-glycerol + (9Z)-octadecenoate + H(+). The enzyme catalyses 2-(5Z,8Z,11Z,14Z-eicosatetraenoyl)-glycerol + H2O = glycerol + (5Z,8Z,11Z,14Z)-eicosatetraenoate + H(+). It catalyses the reaction 1-(9Z-octadecenoyl)-glycerol + H2O = glycerol + (9Z)-octadecenoate + H(+). It carries out the reaction 2-(9Z-octadecenoyl)-glycerol + H2O = glycerol + (9Z)-octadecenoate + H(+). The catalysed reaction is 1-O-hexadecyl-2-acetyl-sn-glycerol + H2O = 1-O-hexadecyl-sn-glycerol + acetate + H(+). The enzyme catalyses 1,2-di-(9Z-octadecenoyl)-sn-glycerol + H2O = (9Z-octadecenoyl)-glycerol + (9Z)-octadecenoate + H(+). It catalyses the reaction 1,3-di-(9Z-octadecenoyl)-glycerol + H2O = 1-(9Z-octadecenoyl)-glycerol + (9Z)-octadecenoate + H(+). It carries out the reaction 1,2-di-(9Z-octadecenoyl)-glycerol + H2O = 2-(9Z-octadecenoyl)-glycerol + (9Z)-octadecenoate + H(+). It participates in glycerolipid metabolism; triacylglycerol degradation. Lipase with broad substrate specificity, catalyzing the hydrolysis of triacylglycerols (TAGs), diacylglycerols (DAGs), monoacylglycerols (MAGs), cholesteryl esters and retinyl esters. Shows a preferential hydrolysis of DAGs over TAGs and MAGs. Preferentially hydrolyzes fatty acid (FA) esters at the sn-3 position of the glycerol backbone in DAGs and FA esters at the sn-1 and sn-2 positions of the glycerol backbone in TAGs. Catalyzes the hydrolysis of 2-arachidonoylglycerol, an endocannabinoid and of 2-acetyl monoalkylglycerol ether, the penultimate precursor of the pathway for de novo synthesis of platelet-activating factor. In adipose tissue and heart, it primarily hydrolyzes stored triglycerides to free fatty acids, while in steroidogenic tissues, it principally converts cholesteryl esters to free cholesterol for steroid hormone production. The sequence is that of Hormone-sensitive lipase (LIPE) from Bos taurus (Bovine).